The primary structure comprises 352 residues: Aromatic amino acid aminotransferase (352 aa).

Lys217 is subject to N6-(pyridoxal phosphate)lysine.

Belongs to the class-II pyridoxal-phosphate-dependent aminotransferase family. In terms of assembly, homodimer. It depends on pyridoxal 5'-phosphate as a cofactor.

It catalyses the reaction an aromatic L-alpha-amino acid + 2-oxoglutarate = an aromatic oxo-acid + L-glutamate. Aminotransferase that catalyzes the conversion of aromatic amino acids and 2-oxoglutarate into corresponding aromatic oxo acids and L-glutamate. The protein is Aromatic amino acid aminotransferase of Cutibacterium acnes (strain DSM 16379 / KPA171202) (Propionibacterium acnes).